The following is a 201-amino-acid chain: Recombination protein RecR (201 aa).

The C4-type zinc finger occupies 57–72 (CADCRTFTEQEVCNIC). The Toprim domain occupies 81–176 (GQICVVESPA…EASRIAHGVP (96 aa)).

It belongs to the RecR family.

Functionally, may play a role in DNA repair. It seems to be involved in an RecBC-independent recombinational process of DNA repair. It may act with RecF and RecO. This Salmonella arizonae (strain ATCC BAA-731 / CDC346-86 / RSK2980) protein is Recombination protein RecR.